A 115-amino-acid polypeptide reads, in one-letter code: UPF0127 protein PH1112 (115 aa).

It belongs to the UPF0127 family.

The protein is UPF0127 protein PH1112 of Pyrococcus horikoshii (strain ATCC 700860 / DSM 12428 / JCM 9974 / NBRC 100139 / OT-3).